Here is a 142-residue protein sequence, read N- to C-terminus: Large ribosomal subunit protein bL17 (142 aa).

It belongs to the bacterial ribosomal protein bL17 family. In terms of assembly, part of the 50S ribosomal subunit. Contacts protein L32.

This is Large ribosomal subunit protein bL17 from Wolbachia sp. subsp. Brugia malayi (strain TRS).